A 480-amino-acid polypeptide reads, in one-letter code: Cobyric acid synthase (480 aa).

A GATase cobBQ-type domain is found at 249–436; sequence KLKVVVPVLT…LHGFLDSEAA (188 aa). The active-site Nucleophile is the Cys330. The active site involves His428.

Belongs to the CobB/CobQ family. CobQ subfamily.

It functions in the pathway cofactor biosynthesis; adenosylcobalamin biosynthesis. Catalyzes amidations at positions B, D, E, and G on adenosylcobyrinic A,C-diamide. NH(2) groups are provided by glutamine, and one molecule of ATP is hydrogenolyzed for each amidation. This is Cobyric acid synthase from Vibrio vulnificus (strain YJ016).